We begin with the raw amino-acid sequence, 309 residues long: High-affinity zinc uptake system protein AztC (309 aa).

Positions 1-24 (MKDWLFRIATCSIMTFSSLAAAQA) are cleaved as a signal peptide. His-61 contributes to the Zn(2+) binding site. The D-loop stretch occupies residues 117-132 (GGGHYHYIDGKAVFHA). His-138 serves as a coordination point for Zn(2+). Cys-158 and Cys-165 are oxidised to a cystine. A Zn(2+)-binding site is contributed by His-204. The Z-loop stretch occupies residues 222–229 (QGVSTESE). Asp-279 contributes to the Zn(2+) binding site.

It belongs to the bacterial solute-binding protein 9 family. As to quaternary structure, monomer.

The protein localises to the periplasm. Part of the ATP-binding cassette (ABC) transport system AztABCD involved in zinc import. Binds zinc with high affinity and specificity and delivers it to the membrane permease for translocation into the cytoplasm. The sequence is that of High-affinity zinc uptake system protein AztC from Paracoccus denitrificans (strain Pd 1222).